Reading from the N-terminus, the 463-residue chain is Chaperone SurA (463 aa).

The signal sequence occupies residues 1–25; it reads MTKPFSVVLASLLAITSTVSPLASA. PpiC domains lie at 174–276 and 289–388; these read GSQY…KLVE and VTEY…QRVG. Disordered regions lie at residues 328-348 and 432-463; these read QATAKESSEDTNSRGQGGDLG and RTGDRADDNATAAPAKSADPAAPSPPPAKPTR. Residues 440–452 show a composition bias toward low complexity; the sequence is NATAAPAKSADPA. Over residues 453–463 the composition is skewed to pro residues; sequence APSPPPAKPTR.

Its subcellular location is the periplasm. It catalyses the reaction [protein]-peptidylproline (omega=180) = [protein]-peptidylproline (omega=0). Functionally, chaperone involved in the correct folding and assembly of outer membrane proteins. Recognizes specific patterns of aromatic residues and the orientation of their side chains, which are found more frequently in integral outer membrane proteins. May act in both early periplasmic and late outer membrane-associated steps of protein maturation. In Xanthomonas euvesicatoria pv. vesicatoria (strain 85-10) (Xanthomonas campestris pv. vesicatoria), this protein is Chaperone SurA.